Here is a 24-residue protein sequence, read N- to C-terminus: Chlorate reductase subunit beta (24 aa).

As to quaternary structure, heterotrimer of alpha, beta and gamma subunits. It depends on [3Fe-4S] cluster as a cofactor. Requires [4Fe-4S] cluster as cofactor.

It is found in the cytoplasm. Its function is as follows. Electron transfer subunit of the chlorate reductase. This Stutzerimonas chloritidismutans (Pseudomonas chloritidismutans) protein is Chlorate reductase subunit beta.